Here is a 74-residue protein sequence, read N- to C-terminus: Small ribosomal subunit protein bS18 (74 aa).

It belongs to the bacterial ribosomal protein bS18 family. Part of the 30S ribosomal subunit. Forms a tight heterodimer with protein bS6.

Its function is as follows. Binds as a heterodimer with protein bS6 to the central domain of the 16S rRNA, where it helps stabilize the platform of the 30S subunit. The chain is Small ribosomal subunit protein bS18 from Coprothermobacter proteolyticus (strain ATCC 35245 / DSM 5265 / OCM 4 / BT).